Reading from the N-terminus, the 308-residue chain is Cytochrome b (308 aa).

Transmembrane regions (helical) follow at residues 1–21, 45–66, 81–101, and 146–166; these read FGSLLGICLATQIITGLLMAM, WLIRNLHANGASMFFICIYLHI, WNTGVILLLTLMATAFVGYVL, and FFALHFLLPFIITGLTLVHLT. Residues His51 and His65 each coordinate heme b. Heme b is bound by residues His150 and His164. His169 contacts a ubiquinone. Transmembrane regions (helical) follow at residues 194 to 214, 256 to 276, and 288 to 308; these read IKDILGFMAMLLPLMSLAMFS, LGGVLALAASVLILFLIPFLH, and LSQLMFWILVANLLILTWVGS.

This sequence belongs to the cytochrome b family. The cytochrome bc1 complex contains 11 subunits: 3 respiratory subunits (MT-CYB, CYC1 and UQCRFS1), 2 core proteins (UQCRC1 and UQCRC2) and 6 low-molecular weight proteins (UQCRH/QCR6, UQCRB/QCR7, UQCRQ/QCR8, UQCR10/QCR9, UQCR11/QCR10 and a cleavage product of UQCRFS1). This cytochrome bc1 complex then forms a dimer. The cofactor is heme b.

Its subcellular location is the mitochondrion inner membrane. Functionally, component of the ubiquinol-cytochrome c reductase complex (complex III or cytochrome b-c1 complex) that is part of the mitochondrial respiratory chain. The b-c1 complex mediates electron transfer from ubiquinol to cytochrome c. Contributes to the generation of a proton gradient across the mitochondrial membrane that is then used for ATP synthesis. The chain is Cytochrome b (MT-CYB) from Scytalopus magellanicus (Magellanic tapaculo).